The primary structure comprises 596 residues: Sphingomyelinase C 1 (596 aa).

The N-terminal stretch at 1–36 (MITKRNIPCKKNWKYKKKSISLTLITICYMFLFLTS) is a signal peptide. The tract at residues 63 to 118 (KIEDSTNTDPSSNVNEEDENSINANANDNAPSDSDSSNPRSPDKNPVNPTSPNSSS) is disordered. Residues 67–76 (STNTDPSSNV) show a composition bias toward polar residues. Low complexity predominate over residues 83 to 118 (SINANANDNAPSDSDSSNPRSPDKNPVNPTSPNSSS).

Its subcellular location is the secreted. It carries out the reaction a sphingomyelin + H2O = phosphocholine + an N-acylsphing-4-enine + H(+). This chain is Sphingomyelinase C 1 (sph1), found in Leptospira interrogans serogroup Icterohaemorrhagiae serovar copenhageni (strain Fiocruz L1-130).